The following is a 319-amino-acid chain: N-acetyllactosaminide alpha-1,3-galactosyltransferase-like 1 (319 aa).

Residues 1–6 (MQYKKE) lie on the Cytoplasmic side of the membrane. A helical; Signal-anchor for type II membrane protein transmembrane segment spans residues 7–26 (ALLLMLFAVLLALTQRFSYS). The Lumenal portion of the chain corresponds to 27–319 (RTKDHLQKMY…IKHIKIAWKP (293 aa)). N89 and N101 each carry an N-linked (GlcNAc...) asparagine glycan. Residues 97–102 (FATGNF), 188–190 (AVN), and 210–213 (HAWW) each bind substrate. E278 serves as the catalytic Nucleophile.

Belongs to the glycosyltransferase 6 family. The cofactor is Mn(2+).

The protein localises to the golgi apparatus. The protein resides in the golgi stack membrane. The catalysed reaction is a beta-D-galactosyl-(1-&gt;4)-N-acetyl-beta-D-glucosaminyl derivative + UDP-alpha-D-galactose = an alpha-D-galactosyl-(1-&gt;3)-beta-D-galactosyl-(1-&gt;4)-N-acetyl-beta-D-glucosaminyl derivative + UDP + H(+). The protein operates within protein modification; protein glycosylation. Synthesizes the galactose-alpha(1,3)-galactose group by catalyzing the transfer of a galactose residue, with an alpha-1,3 linkage, on terminal lactosaminide (Gal-beta-1,4-GlcNAc-R) disaccharide borne by a glycoprotein or a glycolipid. In Mus musculus (Mouse), this protein is N-acetyllactosaminide alpha-1,3-galactosyltransferase-like 1 (Ggta1l1).